The sequence spans 507 residues: 25-hydroxyvitamin D-1 alpha hydroxylase, mitochondrial (507 aa).

C454 is a heme binding site.

The protein belongs to the cytochrome P450 family. Requires heme as cofactor. Kidney.

It is found in the mitochondrion membrane. The catalysed reaction is calcidiol + 2 reduced [adrenodoxin] + O2 + 2 H(+) = calcitriol + 2 oxidized [adrenodoxin] + H2O. It carries out the reaction secalciferol + 2 reduced [adrenodoxin] + O2 + 2 H(+) = calcitetrol + 2 oxidized [adrenodoxin] + H2O. It catalyses the reaction 25-hydroxy-24-oxocalciol + 2 reduced [adrenodoxin] + O2 + 2 H(+) = (1S)-1,25-dihydroxy-24-oxocalciol + 2 oxidized [adrenodoxin] + H2O. The enzyme catalyses 25-hydroxyvitamin D2 + 2 reduced [adrenodoxin] + O2 + 2 H(+) = 1alpha,25-dihydroxyvitamin D2 + 2 oxidized [adrenodoxin] + H2O. The protein operates within hormone biosynthesis; vitamin D biosynthesis. Activated by cardiolipin and dioleoyl phosphatidylethanolamine (DOPE), phospholipids found in the inner mitochondrial membrane. Inhibited by high substrate concentration. Functionally, a cytochrome P450 monooxygenase involved in vitamin D metabolism and in calcium and phosphorus homeostasis. Catalyzes the rate-limiting step in the activation of vitamin D in the kidney, namely the hydroxylation of 25-hydroxyvitamin D3/calcidiol at the C1-alpha position to form the hormonally active form of vitamin D3, 1alpha,25-dihydroxyvitamin D3/calcitriol that acts via the vitamin D receptor (VDR). Has 1-alpha-hydroxylase activity on vitamin D intermediates of the CYP24A1-mediated inactivation pathway. Converts 24R,25-dihydroxyvitamin D3/secalciferol to 1-alpha,24,25-trihydroxyvitamin D3, an active ligand of VDR. Also active on 25-hydroxyvitamin D2. Mechanistically, uses molecular oxygen inserting one oxygen atom into a substrate, and reducing the second into a water molecule, with two electrons provided by NADPH via FDXR/adrenodoxin reductase and FDX1/adrenodoxin. This chain is 25-hydroxyvitamin D-1 alpha hydroxylase, mitochondrial (Cyp27b1), found in Mus musculus (Mouse).